A 174-amino-acid chain; its full sequence is Repair DNA polymerase X (174 aa).

Residues 42–51 (REEKMLNDVD) form an involved in ssDNA binding region. Mg(2+) is bound by residues Asp-49 and Asp-51. Cys-81 and Cys-86 are disulfide-bonded. Asp-100 provides a ligand contact to Mg(2+).

It belongs to the DNA polymerase type-X family. It depends on Mg(2+) as a cofactor.

It is found in the virion. It carries out the reaction DNA(n) + a 2'-deoxyribonucleoside 5'-triphosphate = DNA(n+1) + diphosphate. Error-prone polymerase lacking a proofreading 3'-5' exonuclease which catalyzes the gap-filling reaction during the DNA repair process. Specifically binds intermediates in the single-nucleotide base-excision repair process. Also catalyzes DNA polymerization with low nucleotide-insertion fidelity. Probably acts as a strategic DNA mutase, which gives rise to a rapid emergence of variants. Generates mismatched G-G pairs, in that case, the polymerase first binds the deoxynucleotide followed by mismatch formation. Together with the viral DNA ligase, fills the single nucleotide gaps generated by the AP endonuclease. Binds DNA with high affinity via the helix alphaE. The sequence is that of Repair DNA polymerase X from Ornithodoros (relapsing fever ticks).